Reading from the N-terminus, the 612-residue chain is Kelch repeat and BTB domain-containing protein 3 (612 aa).

Residues 52-119 form the BTB domain; that stretch reads YDFKIIMKDE…AYTGKTKITD (68 aa). The BACK domain maps to 150 to 250; it reads NLVNCLQLLS…VRLHQLSEET (101 aa). Kelch repeat units follow at residues 291–337, 339–390, 400–450, 452–502, and 548–595; these read STTE…GSSL, SYGE…STMK, MALD…PEAS, CQNV…ATLI, and GIED…FYCQ.

The chain is Kelch repeat and BTB domain-containing protein 3 from Pongo abelii (Sumatran orangutan).